Reading from the N-terminus, the 438-residue chain is Cysteine--tRNA ligase (438 aa).

Residue Cys28 participates in Zn(2+) binding. The 'HIGH' region motif lies at 30 to 40 (PTVYNHLHLGN). Zn(2+)-binding residues include Cys207, His232, and Glu236. Residues 264 to 268 (KMSKS) carry the 'KMSKS' region motif. Lys267 is a binding site for ATP.

The protein belongs to the class-I aminoacyl-tRNA synthetase family. As to quaternary structure, monomer. Requires Zn(2+) as cofactor.

It localises to the cytoplasm. It carries out the reaction tRNA(Cys) + L-cysteine + ATP = L-cysteinyl-tRNA(Cys) + AMP + diphosphate. The sequence is that of Cysteine--tRNA ligase from Aster yellows witches'-broom phytoplasma (strain AYWB).